A 273-amino-acid polypeptide reads, in one-letter code: Undecaprenyl-diphosphatase (273 aa).

7 helical membrane-spanning segments follow: residues 6-26 (SLLI…LPVS), 45-65 (AKTF…VMFW), 90-110 (LTLI…LLFH), 116-136 (LFNP…LIAA), 190-210 (YAAS…ATAL), 222-242 (GDIS…LIAI), and 252-272 (ISFI…YVVF).

This sequence belongs to the UppP family.

The protein resides in the cell inner membrane. The enzyme catalyses di-trans,octa-cis-undecaprenyl diphosphate + H2O = di-trans,octa-cis-undecaprenyl phosphate + phosphate + H(+). Its function is as follows. Catalyzes the dephosphorylation of undecaprenyl diphosphate (UPP). Confers resistance to bacitracin. The polypeptide is Undecaprenyl-diphosphatase (Shigella sonnei (strain Ss046)).